Here is a 314-residue protein sequence, read N- to C-terminus: Malate dehydrogenase (314 aa).

Residues 7 to 12 (GAGNVG) and D32 contribute to the NAD(+) site. Residues R81 and R87 each coordinate substrate. Residues N94 and 117–119 (VAN) contribute to the NAD(+) site. Substrate is bound by residues N119 and R150. H174 acts as the Proton acceptor in catalysis.

This sequence belongs to the LDH/MDH superfamily. MDH type 3 family.

The catalysed reaction is (S)-malate + NAD(+) = oxaloacetate + NADH + H(+). In terms of biological role, catalyzes the reversible oxidation of malate to oxaloacetate. The protein is Malate dehydrogenase of Salinibacter ruber (strain DSM 13855 / M31).